We begin with the raw amino-acid sequence, 602 residues long: Non structural protein VP9' (602 aa).

It is found in the host cytoplasm. The chain is Non structural protein VP9' from Callospermophilus lateralis (Golden-mantled ground squirrel).